Consider the following 202-residue polypeptide: Transmembrane 4 L6 family member 4 (202 aa).

Topologically, residues 1–9 are cytoplasmic; that stretch reads MCTGGCARC. The helical transmembrane segment at 10-30 threads the bilayer; that stretch reads LGGTLIPLAVFAVLANILLFF. The Extracellular segment spans residues 31–48; the sequence is PGGKVVDDNSHLSDEVWY. A helical membrane pass occupies residues 49-69; that stretch reads FGGILGSGVLMIFPALVFLGL. Topologically, residues 70–93 are cytoplasmic; it reads QNNDCCGCCGNESCGKRFAMFTST. The helical transmembrane segment at 94–114 threads the bilayer; that stretch reads LFAVVGFLGAAYSFIVSAVSI. Residues 115-158 lie on the Extracellular side of the membrane; sequence NKGPKCFMTNNTWGYPFHDGDYLNDQALWSKCEEPRDVVPWNLT. Residue N156 is glycosylated (N-linked (GlcNAc...) asparagine). Residues 159-179 form a helical membrane-spanning segment; sequence LFSILLVIGGIQMVLCAIQVI. Residues 180–202 are Cytoplasmic-facing; it reads NGLLGTLCGDCQCCGCCGGDRPV.

Belongs to the L6 tetraspanin family. As to expression, expressed in liver and testis. Up-regulated in regenerating liver after partial hepatectomy.

It localises to the membrane. Functionally, regulates the adhesive and proliferative status of intestinal epithelial cells. Can mediate density-dependent cell proliferation. This Rattus norvegicus (Rat) protein is Transmembrane 4 L6 family member 4 (Tm4sf4).